An 88-amino-acid polypeptide reads, in one-letter code: Small ribosomal subunit protein uS17 (88 aa).

It belongs to the universal ribosomal protein uS17 family. Part of the 30S ribosomal subunit.

Its function is as follows. One of the primary rRNA binding proteins, it binds specifically to the 5'-end of 16S ribosomal RNA. The polypeptide is Small ribosomal subunit protein uS17 (Leuconostoc mesenteroides subsp. mesenteroides (strain ATCC 8293 / DSM 20343 / BCRC 11652 / CCM 1803 / JCM 6124 / NCDO 523 / NBRC 100496 / NCIMB 8023 / NCTC 12954 / NRRL B-1118 / 37Y)).